We begin with the raw amino-acid sequence, 177 residues long: Large ribosomal subunit protein uL6 (177 aa).

This sequence belongs to the universal ribosomal protein uL6 family. As to quaternary structure, part of the 50S ribosomal subunit.

In terms of biological role, this protein binds to the 23S rRNA, and is important in its secondary structure. It is located near the subunit interface in the base of the L7/L12 stalk, and near the tRNA binding site of the peptidyltransferase center. The polypeptide is Large ribosomal subunit protein uL6 (Herminiimonas arsenicoxydans).